The following is a 619-amino-acid chain: UvrABC system protein C (619 aa).

One can recognise a GIY-YIG domain in the interval 20 to 98 (TAPGVYRMYA…IKSLSPRYNV (79 aa)). In terms of domain architecture, UVR spans 207–242 (DQLGEEIMHSMQQASEALEFERAARLRDLLSSLRSM).

It belongs to the UvrC family. Interacts with UvrB in an incision complex.

It localises to the cytoplasm. The UvrABC repair system catalyzes the recognition and processing of DNA lesions. UvrC both incises the 5' and 3' sides of the lesion. The N-terminal half is responsible for the 3' incision and the C-terminal half is responsible for the 5' incision. The sequence is that of UvrABC system protein C from Xanthomonas axonopodis pv. citri (strain 306).